The following is a 132-amino-acid chain: Small ribosomal subunit protein uS8 (132 aa).

It belongs to the universal ribosomal protein uS8 family. In terms of assembly, part of the 30S ribosomal subunit. Contacts proteins S5 and S12.

In terms of biological role, one of the primary rRNA binding proteins, it binds directly to 16S rRNA central domain where it helps coordinate assembly of the platform of the 30S subunit. In Rickettsia bellii (strain OSU 85-389), this protein is Small ribosomal subunit protein uS8.